Consider the following 409-residue polypeptide: MDKLLERFLNYVSLDTQSKAGVRQVPSTEGQWKLLHLLKEQLEEMGLINVTLSEKGTLMATLPANVPGDIPAIGFISHVDTSPDCSGKNVNPQIVENYRGGDIALGIGDEVLSPVMFPVLHQLLGQTLITTDGKTLLGADDKAGIAEIMTALAVLQQKNIPHGDIRVAFTPDEEVGKGAKHFDVDAFDARWAYTVDGGGVGELEFENFNAASVNIKIVGNNVHPGTAKGVMVNALSLAARIHAEVPADESPEMTEGYEGFYHLASMKGTVERADMHYIIRDFDRKQFEARKRKMMEIAKKVGKGLHPDCYIELVIEDSYYNMREKVVEHPHILDIAQQAMRDCDIEPELKPIRGGTDGAQLSFMGLPCPNLFTGGYNYHGKHEFVTLEGMEKAVQVIVRIAELTAQRKS.

A Zn(2+)-binding site is contributed by histidine 78. The active site involves aspartate 80. A Zn(2+)-binding site is contributed by aspartate 140. Residue glutamate 173 is the Proton acceptor of the active site. Glutamate 174, aspartate 196, and histidine 379 together coordinate Zn(2+).

The protein belongs to the peptidase M20B family. It depends on Zn(2+) as a cofactor.

Its subcellular location is the cytoplasm. The catalysed reaction is Release of the N-terminal residue from a tripeptide.. Its function is as follows. Cleaves the N-terminal amino acid of tripeptides. The polypeptide is Peptidase T (Escherichia coli O139:H28 (strain E24377A / ETEC)).